A 372-amino-acid polypeptide reads, in one-letter code: Glutamate 5-kinase (372 aa).

Lysine 14 serves as a coordination point for ATP. Residues serine 54, aspartate 141, and asparagine 153 each coordinate substrate. 173 to 174 is a binding site for ATP; that stretch reads TD. The 79-residue stretch at 280–358 folds into the PUA domain; sequence RGHVVIDDGA…GEIESVLGYM (79 aa).

This sequence belongs to the glutamate 5-kinase family.

It is found in the cytoplasm. It carries out the reaction L-glutamate + ATP = L-glutamyl 5-phosphate + ADP. Its pathway is amino-acid biosynthesis; L-proline biosynthesis; L-glutamate 5-semialdehyde from L-glutamate: step 1/2. Catalyzes the transfer of a phosphate group to glutamate to form L-glutamate 5-phosphate. This chain is Glutamate 5-kinase, found in Paraburkholderia phymatum (strain DSM 17167 / CIP 108236 / LMG 21445 / STM815) (Burkholderia phymatum).